A 116-amino-acid polypeptide reads, in one-letter code: NADPH-dependent 7-cyano-7-deazaguanine reductase (116 aa).

The active-site Thioimide intermediate is C31. Catalysis depends on D38, which acts as the Proton donor. Substrate-binding positions include 53–55 (VEL) and 72–73 (YE).

The protein belongs to the GTP cyclohydrolase I family. QueF type 1 subfamily.

Its subcellular location is the cytoplasm. The enzyme catalyses 7-aminomethyl-7-carbaguanine + 2 NADP(+) = 7-cyano-7-deazaguanine + 2 NADPH + 3 H(+). It participates in tRNA modification; tRNA-queuosine biosynthesis. Functionally, catalyzes the NADPH-dependent reduction of 7-cyano-7-deazaguanine (preQ0) to 7-aminomethyl-7-deazaguanine (preQ1). This is NADPH-dependent 7-cyano-7-deazaguanine reductase from Chlorobium phaeovibrioides (strain DSM 265 / 1930) (Prosthecochloris vibrioformis (strain DSM 265)).